The sequence spans 83 residues: MKTLLLTLVVVTMVCLDLGYTRRCFNQQSSQPKTTKSCPLGENSCYNKQWRDHRGSITERGCGCPKVKPGIKLRCCESEDCNN.

Positions 1–21 (MKTLLLTLVVVTMVCLDLGYT) are cleaved as a signal peptide. Disulfide bonds link C24/C45, C38/C62, C64/C75, and C76/C81.

Belongs to the three-finger toxin family. Short-chain subfamily. Type I alpha-neurotoxin sub-subfamily. As to expression, expressed by the venom gland.

It is found in the secreted. Binds to muscle nicotinic acetylcholine receptor (nAChR) and inhibit acetylcholine from binding to the receptor, thereby impairing neuromuscular transmission. The sequence is that of Short neurotoxin NCA-02/NCA-05/UER-05 from Laticauda colubrina (Yellow-lipped sea krait).